Here is an 84-residue protein sequence, read N- to C-terminus: Beta-defensin 119 (84 aa).

A signal peptide spans 1–21 (MKLLYLFLAILLAIEEPVISG). Cystine bridges form between Cys-28–Cys-55, Cys-35–Cys-49, and Cys-39–Cys-56.

This sequence belongs to the beta-defensin family. Abundant expression in the male reproductive tract only. Abundant expressed in testis and the caput region of epididymis, but low in the corpus region.

The protein localises to the secreted. Functionally, has antibacterial activity. This chain is Beta-defensin 119 (DEFB119), found in Homo sapiens (Human).